The sequence spans 373 residues: 3 beta-hydroxysteroid dehydrogenase/Delta 5--&gt;4-isomerase type 1 (373 aa).

Residues 10–15 (GAGGFL), Tyr-155, and Lys-159 each bind NADP(+). The active-site Proton donor is the Lys-159. The helical transmembrane segment at 288–308 (LSLMYWIGFLLEIVSFLLRPI) threads the bilayer.

It belongs to the 3-beta-HSD family. As to expression, placenta and skin. Predominantly expressed in mammary gland tissue.

The protein localises to the endoplasmic reticulum membrane. Its subcellular location is the mitochondrion membrane. It catalyses the reaction a 3beta-hydroxy-Delta(5)-steroid + NAD(+) = a 3-oxo-Delta(5)-steroid + NADH + H(+). The enzyme catalyses pregnenolone + NAD(+) = pregn-5-ene-3,20-dione + NADH + H(+). It carries out the reaction 3beta-hydroxyandrost-5-en-17-one + NAD(+) = androst-5-ene-3,17-dione + NADH + H(+). The catalysed reaction is androst-5-en-3beta,17beta-diol + NAD(+) = 17beta-hydroxy-androst-5-en-3-one + NADH + H(+). It catalyses the reaction a 3beta-hydroxysteroid + NADP(+) = a 3-oxosteroid + NADPH + H(+). The enzyme catalyses 5alpha-androstane-3beta,17beta-diol + NADP(+) = 17beta-hydroxy-5alpha-androstan-3-one + NADPH + H(+). It carries out the reaction 3beta-hydroxy-5alpha-androstan-17-one + NADP(+) = 5alpha-androstan-3,17-dione + NADPH + H(+). The catalysed reaction is a 3-oxo-Delta(5)-steroid = a 3-oxo-Delta(4)-steroid. It catalyses the reaction pregn-5-ene-3,20-dione = progesterone. The enzyme catalyses androst-5-ene-3,17-dione = androst-4-ene-3,17-dione. It carries out the reaction 17beta-hydroxy-androst-5-en-3-one = testosterone. The catalysed reaction is 5alpha-androstane-3beta,17beta-diol + NAD(+) = 17beta-hydroxy-5alpha-androstan-3-one + NADH + H(+). It functions in the pathway steroid hormone biosynthesis. The protein operates within steroid metabolism. A bifunctional enzyme responsible for the oxidation and isomerization of 3beta-hydroxy-Delta(5)-steroid precursors to 3-oxo-Delta(4)-steroids, an essential step in steroid hormone biosynthesis. Specifically catalyzes the conversion of pregnenolone to progesterone, 17alpha-hydroxypregnenolone to 17alpha-hydroxyprogesterone, dehydroepiandrosterone (DHEA) to 4-androstenedione, and androstenediol to testosterone. Additionally, catalyzes the interconversion between 3beta-hydroxy and 3-oxo-5alpha-androstane steroids controlling the bioavalability of the active forms. Specifically converts dihydrotestosterone to its inactive form 5alpha-androstanediol, that does not bind androgen receptor/AR. Also converts androstanedione, a precursor of testosterone and estrone, to epiandrosterone. Expected to use NAD(+) as preferred electron donor for the 3beta-hydroxy-steroid dehydrogenase activity and NADPH for the 3-ketosteroid reductase activity. The polypeptide is 3 beta-hydroxysteroid dehydrogenase/Delta 5--&gt;4-isomerase type 1 (Homo sapiens (Human)).